The following is a 136-amino-acid chain: Large ribosomal subunit protein bL20 (136 aa).

It belongs to the bacterial ribosomal protein bL20 family.

Its function is as follows. Binds directly to 23S ribosomal RNA and is necessary for the in vitro assembly process of the 50S ribosomal subunit. It is not involved in the protein synthesizing functions of that subunit. The protein is Large ribosomal subunit protein bL20 of Tropheryma whipplei (strain Twist) (Whipple's bacillus).